Consider the following 318-residue polypeptide: Ribose-phosphate pyrophosphokinase (318 aa).

ATP is bound by residues 40-42 (DGE) and 99-100 (RQ). His-134 and Asp-173 together coordinate Mg(2+). Lys-196 is a catalytic residue. D-ribose 5-phosphate-binding positions include Arg-198, Asp-222, and 226 to 230 (DTAGT).

This sequence belongs to the ribose-phosphate pyrophosphokinase family. Class I subfamily. In terms of assembly, homohexamer. Mg(2+) serves as cofactor.

It is found in the cytoplasm. It catalyses the reaction D-ribose 5-phosphate + ATP = 5-phospho-alpha-D-ribose 1-diphosphate + AMP + H(+). It participates in metabolic intermediate biosynthesis; 5-phospho-alpha-D-ribose 1-diphosphate biosynthesis; 5-phospho-alpha-D-ribose 1-diphosphate from D-ribose 5-phosphate (route I): step 1/1. Functionally, involved in the biosynthesis of the central metabolite phospho-alpha-D-ribosyl-1-pyrophosphate (PRPP) via the transfer of pyrophosphoryl group from ATP to 1-hydroxyl of ribose-5-phosphate (Rib-5-P). This is Ribose-phosphate pyrophosphokinase from Burkholderia pseudomallei (strain K96243).